The chain runs to 119 residues: Large ribosomal subunit protein uL14 (119 aa).

This sequence belongs to the universal ribosomal protein uL14 family. Part of the 50S ribosomal subunit. Forms a cluster with proteins L3 and L19. In the 70S ribosome, L14 and L19 interact and together make contacts with the 16S rRNA in bridges B5 and B8.

Binds to 23S rRNA. Forms part of two intersubunit bridges in the 70S ribosome. This is Large ribosomal subunit protein uL14 from Wolbachia sp. subsp. Brugia malayi (strain TRS).